The sequence spans 631 residues: Chaperone protein DnaK (631 aa).

Position 198 is a phosphothreonine; by autocatalysis (T198). The disordered stretch occupies residues 598 to 631 (YSAQQGGEQPGAAKKDDVVDAEFTEVDDDKKKSA).

This sequence belongs to the heat shock protein 70 family.

Its function is as follows. Acts as a chaperone. In Azorhizobium caulinodans (strain ATCC 43989 / DSM 5975 / JCM 20966 / LMG 6465 / NBRC 14845 / NCIMB 13405 / ORS 571), this protein is Chaperone protein DnaK.